The following is a 717-amino-acid chain: Delta-1-pyrroline-5-carboxylate synthase A (717 aa).

The glutamate 5-kinase stretch occupies residues 1-296; that stretch reads MEELDRSRAF…WAPITDSNAR (296 aa). 3 residues coordinate substrate: Ser60, Asp157, and Asn176. ATP contacts are provided by residues 196–197 and 236–242; these read SD and RGGMTAK. Positions 297–717 are gamma-glutamyl phosphate reductase; sequence DMAVAARESS…YTHQDIPIQA (421 aa).

This sequence in the N-terminal section; belongs to the glutamate 5-kinase family. In the C-terminal section; belongs to the gamma-glutamyl phosphate reductase family.

It carries out the reaction L-glutamate + ATP = L-glutamyl 5-phosphate + ADP. It catalyses the reaction L-glutamate 5-semialdehyde + phosphate + NADP(+) = L-glutamyl 5-phosphate + NADPH + H(+). It participates in amino-acid biosynthesis; L-proline biosynthesis; L-glutamate 5-semialdehyde from L-glutamate: step 1/2. It functions in the pathway amino-acid biosynthesis; L-proline biosynthesis; L-glutamate 5-semialdehyde from L-glutamate: step 2/2. P5CS plays a key role in proline biosynthesis, leading to osmoregulation in plants. The sequence is that of Delta-1-pyrroline-5-carboxylate synthase A (P5CSA) from Arabidopsis thaliana (Mouse-ear cress).